The sequence spans 116 residues: MREKLTKLKKTQEFKRVYSNGKTVANRFIVMYYMPNGLQVNRAGYSVSKKIGKSVVRNRVKRLLHESFRLLNSNLRQGYDVVFVARGKIAEADFHTLKESIEKLLKKTPLYEEKER.

This sequence belongs to the RnpA family. Consists of a catalytic RNA component (M1 or rnpB) and a protein subunit.

It carries out the reaction Endonucleolytic cleavage of RNA, removing 5'-extranucleotides from tRNA precursor.. In terms of biological role, RNaseP catalyzes the removal of the 5'-leader sequence from pre-tRNA to produce the mature 5'-terminus. It can also cleave other RNA substrates such as 4.5S RNA. The protein component plays an auxiliary but essential role in vivo by binding to the 5'-leader sequence and broadening the substrate specificity of the ribozyme. The chain is Ribonuclease P protein component from Caldanaerobacter subterraneus subsp. tengcongensis (strain DSM 15242 / JCM 11007 / NBRC 100824 / MB4) (Thermoanaerobacter tengcongensis).